The chain runs to 1181 residues: Integrin alpha-7 (1181 aa).

A signal peptide spans 1–33 (MAGARSRDPWGASGICYLFGSLLVELLFSRAVA). The Extracellular segment spans residues 34-1082 (FNLDVMGALR…MAVVAEGVPW (1049 aa)). FG-GAP repeat units lie at residues 35–103 (NLDV…ETDC), 110–175 (QGAD…IRDE), 185–238 (EGRP…SADL), 292–349 (DRLP…ASRL), 350–411 (VPEV…HWAG), 412–467 (ISPL…GVVA), and 471–530 (QVLE…IAPR). Asn86 carries N-linked (GlcNAc...) asparagine glycosylation. Cystine bridges form between Cys94/Cys103, Cys140/Cys163, and Cys184/Cys197. Asp372, Asn374, Asp376, Asp380, Asp434, Asn436, Asp438, Asp442, Asp492, Asp494, Asn496, Tyr498, and Asp500 together coordinate Ca(2+). 6 disulfides stabilise this stretch: Cys539-Cys546, Cys552-Cys615, Cys681-Cys687, Cys781-Cys792, Cys939-Cys994, and Cys1001-Cys1006. A glycan (N-linked (GlcNAc...) asparagine) is linked at Asn786. Residues 950–961 (VDSRDRRRRELE) are compositionally biased toward basic and acidic residues. The tract at residues 950 to 978 (VDSRDRRRRELEPPEQQEPGERQEPSMSW) is disordered. N-linked (GlcNAc...) asparagine glycosylation is present at Asn989. N-linked (GlcNAc...) asparagine glycans are attached at residues Asn1025 and Asn1045. A helical membrane pass occupies residues 1083 to 1103 (WVILLAVLAGLLVLALLVLLL). The Cytoplasmic segment spans residues 1104–1181 (WKMGFFKRAK…PDGHPGPGTA (78 aa)). Positions 1107–1111 (GFFKR) match the GFFKR motif motif. The disordered stretch occupies residues 1138–1181 (EKTGTILRNNWGSPRREGPDAHPILAADGHPELGPDGHPGPGTA). Tandem repeats lie at residues 1157-1160 (DAHP), 1165-1168 (DGHP), and 1173-1176 (DGHP). The tract at residues 1157 to 1176 (DAHPILAADGHPELGPDGHP) is 3 X 4 AA repeats of D-X-H-P.

Belongs to the integrin alpha chain family. Heterodimer of an alpha and a beta subunit. The alpha subunit is composed of a heavy and a light chain linked by a disulfide bond. Alpha-7 associates with beta-1. Interacts with COMP. Interacts (via C-terminus intracellular tail region) with CIB1; the interaction is stabilized/increased in a calcium- and magnesium-dependent manner. Post-translationally, ADP-ribosylated on at least two sites of the extracellular domain in skeletal myotubes. In terms of processing, a 70 kDa form is created by proteolytic cleavage. Cleavage is elevated during myogenic differentiation and the cleaved form enhances cell adhesion and spreading on laminin. Isoforms containing segment A are predominantly expressed in skeletal muscle. Isoforms containing segment B are abundantly expressed in skeletal muscle, moderately in cardiac muscle, small intestine, colon, ovary and prostate and weakly in lung and testes. Isoforms containing segment X2D are expressed at low levels in fetal and adult skeletal muscle and in cardiac muscle, but are not detected in myoblasts and myotubes. In muscle fibers isoforms containing segment A and B are expressed at myotendinous and neuromuscular junctions; isoforms containing segment C are expressed at neuromuscular junctions and at extrasynaptic sites. Isoforms containing segments X1 or X2 or, at low levels, X1X2 are expressed in fetal and adult skeletal muscle (myoblasts and myotubes) and cardiac muscle.

The protein localises to the membrane. In terms of biological role, integrin alpha-7/beta-1 is the primary laminin receptor on skeletal myoblasts and adult myofibers. During myogenic differentiation, it may induce changes in the shape and mobility of myoblasts, and facilitate their localization at laminin-rich sites of secondary fiber formation. It is involved in the maintenance of the myofibers cytoarchitecture as well as for their anchorage, viability and functional integrity. Isoform Alpha-7X2B and isoform Alpha-7X1B promote myoblast migration on laminin 1 and laminin 2/4, but isoform Alpha-7X1B is less active on laminin 1 (In vitro). Acts as a Schwann cell receptor for laminin-2. Acts as a receptor of COMP and mediates its effect on vascular smooth muscle cells (VSMCs) maturation. Required to promote contractile phenotype acquisition in differentiated airway smooth muscle (ASM) cells. In Homo sapiens (Human), this protein is Integrin alpha-7 (ITGA7).